A 266-amino-acid polypeptide reads, in one-letter code: Undecaprenyl-diphosphatase (266 aa).

Transmembrane regions (helical) follow at residues 1 to 21 (MDTF…FLPI), 39 to 59 (QGLS…VMYF), 87 to 107 (WWII…KGFI), 111 to 131 (LRNI…LWWA), 144 to 164 (VGWK…IPGT), 183 to 203 (AAAR…AILV), 218 to 238 (ALGL…HYFL), and 246 to 266 (MTPF…FIFL).

It belongs to the UppP family.

The protein resides in the cell inner membrane. It carries out the reaction di-trans,octa-cis-undecaprenyl diphosphate + H2O = di-trans,octa-cis-undecaprenyl phosphate + phosphate + H(+). Functionally, catalyzes the dephosphorylation of undecaprenyl diphosphate (UPP). Confers resistance to bacitracin. The chain is Undecaprenyl-diphosphatase from Shewanella piezotolerans (strain WP3 / JCM 13877).